The sequence spans 30 residues: Non-toxic phospholipase A2 (30 aa).

3 residues coordinate Ca(2+): Y26, G28, and G30.

This sequence belongs to the phospholipase A2 family. Group I subfamily. In terms of assembly, homodimer. The cofactor is Ca(2+). In terms of processing, glycosylated. As to expression, expressed by the venom gland.

The protein localises to the secreted. It catalyses the reaction a 1,2-diacyl-sn-glycero-3-phosphocholine + H2O = a 1-acyl-sn-glycero-3-phosphocholine + a fatty acid + H(+). With respect to regulation, enzymatic activity is diminished by Cd(2+) and Hg(2+). Functionally, relatively highly potent phospholipase A2 that displays potent antimicrobial and hemolytic activities. It does not show cytotoxic effects on the three human cell lines tested. PLA2 catalyzes the calcium-dependent hydrolysis of the 2-acyl groups in 3-sn-phosphoglycerides. It shows similar potencies on both Gram-negative and Gram-positive bacteria: B.cereus (MIC&gt;9 ug/ml), B.subtilis (MIC&gt;12 ug/ml), E.faecalis (MIC&gt;7 ug/ml), S.epidermidis (MIC&gt;12 ug/ml), S.aureux (MIC&gt;5 ug/ml), E.coli (MIC&gt;7 ug/ml), K.pneumonia (MIC&gt;8 ug/ml), P.aeruginosa (MIC&gt;10 ug/ml), and S.enteric (MIC&gt;9 ug/ml). It also shows antifungal activities: A.niger (MIC&gt;15 ug/ml), B.cinerea (MIC&gt;12 ug/ml), F.solani (MIC&gt;15 ug/ml), and P.digitatum (MIC&gt;10 ug/ml). This is Non-toxic phospholipase A2 from Walterinnesia aegyptia (Desert black snake).